A 486-amino-acid polypeptide reads, in one-letter code: Hydrogenobyrinate a,c-diamide synthase (486 aa).

Residues 254–272 are compositionally biased toward pro residues; that stretch reads SPPPPLPVPSPGAAPPDPL. A disordered region spans residues 254–284; the sequence is SPPPPLPVPSPGAAPPDPLVRPGRPRPQAPD. Residues 289–474 enclose the GATase cobBQ-type domain; the sequence is RVAMASGAAF…LHTHWAAEPG (186 aa). The active-site Nucleophile is the C372.

It belongs to the CobB/CbiA family. Mg(2+) is required as a cofactor.

The enzyme catalyses hydrogenobyrinate + 2 L-glutamine + 2 ATP + 2 H2O = hydrogenobyrinate a,c-diamide + 2 L-glutamate + 2 ADP + 2 phosphate + 2 H(+). The protein operates within cofactor biosynthesis; adenosylcobalamin biosynthesis; cob(II)yrinate a,c-diamide from precorrin-2 (aerobic route): step 9/10. In terms of biological role, catalyzes the ATP-dependent amidation of the two carboxylate groups at positions a and c of hydrogenobyrinate, using either L-glutamine or ammonia as the nitrogen source. The sequence is that of Hydrogenobyrinate a,c-diamide synthase from Streptomyces coelicolor (strain ATCC BAA-471 / A3(2) / M145).